The sequence spans 114 residues: Large ribosomal subunit protein uL22 (114 aa).

This sequence belongs to the universal ribosomal protein uL22 family. Part of the 50S ribosomal subunit.

Its function is as follows. This protein binds specifically to 23S rRNA; its binding is stimulated by other ribosomal proteins, e.g. L4, L17, and L20. It is important during the early stages of 50S assembly. It makes multiple contacts with different domains of the 23S rRNA in the assembled 50S subunit and ribosome. In terms of biological role, the globular domain of the protein is located near the polypeptide exit tunnel on the outside of the subunit, while an extended beta-hairpin is found that lines the wall of the exit tunnel in the center of the 70S ribosome. This Methylacidiphilum infernorum (isolate V4) (Methylokorus infernorum (strain V4)) protein is Large ribosomal subunit protein uL22.